Reading from the N-terminus, the 230-residue chain is Protein RESPONSE TO ABA AND SALT 1 (230 aa).

A DOG1 domain is found at 7–230 (SQSFTIFVDG…RLRDRDQERA (224 aa)).

Its function is as follows. Negative regulator of salt (NaCl) tolerance probably by enhancing abscisic acid (ABA) sensitivity. The protein is Protein RESPONSE TO ABA AND SALT 1 of Arabidopsis thaliana (Mouse-ear cress).